The chain runs to 489 residues: Protein LMBR1L (489 aa).

Residues 1 to 21 are Extracellular-facing; the sequence is MEAPDCEVLSVREQLFHERIR. The tract at residues 1–59 is interaction with LGB; the sequence is MEAPDCEVLSVREQLFHERIRECIISTLLFATLYILCHIFLTRFKKPAEFTTVDDADAT. Residues 1–76 are LCN1-binding; it reads MEAPDCEVLS…LCTFTLAIAL (76 aa). Residues 22–42 traverse the membrane as a helical segment; sequence ECIISTLLFATLYILCHIFLT. The Cytoplasmic segment spans residues 43-66; it reads RFKKPAEFTTVDDADATVNKIALE. Residues 67 to 87 form a helical membrane-spanning segment; that stretch reads LCTFTLAIALGAVLLLPFSII. Topologically, residues 88–114 are extracellular; it reads SNEVLLSLPRNYYIQWLNGSLIHGLWN. Residues 115 to 135 traverse the membrane as a helical segment; it reads LVFLFSNLSLIFLMPFAYFFT. Residues 136-154 are Cytoplasmic-facing; sequence ESEGFAGSRKGVLGRVYET. A helical membrane pass occupies residues 155–175; sequence VVMLMLLTLLVLGMVWVASAI. The Extracellular segment spans residues 176–196; that stretch reads VDNNKASRESLYDFWEYYLPY. A helical transmembrane segment spans residues 197-217; sequence LYSCISFLGVLLLLVCTPLGL. The Cytoplasmic segment spans residues 218–305; the sequence is ARMFSVTGKL…NLGYPLAMLC (88 aa). A helical membrane pass occupies residues 306-326; sequence LLVLTGLSVLIVAIHILELLI. Over 327 to 350 the chain is Extracellular; the sequence is DEAAMPRGMQGASLGQVSFSKLGS. A helical transmembrane segment spans residues 351 to 371; sequence FGAVVQVVLIFYLMVSSVVGF. Over 372–388 the chain is Cytoplasmic; the sequence is YSSPLFRSLRPRWHDTA. A helical transmembrane segment spans residues 389–409; the sequence is MTQIIGNCVCLLVLSSALPVF. Topologically, residues 410 to 431 are extracellular; sequence SRTLGLTRFDLLGDFGRFNWLG. The helical transmembrane segment at 432-452 threads the bilayer; sequence NFYIVFLYNAAFAGLTTLCLV. At 453–489 the chain is on the cytoplasmic side; sequence KTFTAAVRAELIRAFGLDRLPLPVSGFPRASRKTQHQ.

It belongs to the LIMR family. As to quaternary structure, dimer. Can also form higher oligomers. Interacts with LCN1; this interaction mediates the endocytosis of LCN1. Interacts with UBAC2, FAF2, VCP, AMFR, ZNRF3, CTNNB1, LRP6, GSK3A, GSK3B, FZD6, DVL2 and RNF43. Interaction with LGB and SCGB1A1 is controversial.

The protein resides in the cell membrane. It is found in the endoplasmic reticulum membrane. Its function is as follows. Plays an essential role in lymphocyte development by negatively regulating the canonical Wnt signaling pathway. In association with UBAC2 and E3 ubiquitin-protein ligase AMFR, promotes the ubiquitin-mediated degradation of CTNNB1 and Wnt receptors FZD6 and LRP6. LMBR1L stabilizes the beta-catenin destruction complex that is required for regulating CTNNB1 levels. Acts as a LCN1 receptor and can mediate its endocytosis. This chain is Protein LMBR1L (LMBR1L), found in Macaca fascicularis (Crab-eating macaque).